We begin with the raw amino-acid sequence, 335 residues long: Eukaryotic translation initiation factor 3 subunit I (335 aa).

5 WD repeats span residues 8 to 47 (GHER…RLGT), 50 to 91 (GHQG…KTWD), 145 to 184 (CAES…LLFN), 189 to 228 (EPDL…VMKT), and 286 to 325 (GHFG…FDFT).

The protein belongs to the eIF-3 subunit I family. As to quaternary structure, component of the eukaryotic translation initiation factor 3 (eIF-3) complex.

It is found in the cytoplasm. Component of the eukaryotic translation initiation factor 3 (eIF-3) complex, which is involved in protein synthesis of a specialized repertoire of mRNAs and, together with other initiation factors, stimulates binding of mRNA and methionyl-tRNAi to the 40S ribosome. The eIF-3 complex specifically targets and initiates translation of a subset of mRNAs involved in cell proliferation. This is Eukaryotic translation initiation factor 3 subunit I (tif34) from Botryotinia fuckeliana (strain B05.10) (Noble rot fungus).